Consider the following 1349-residue polypeptide: Protein strawberry notch homolog 2 (1349 aa).

3 disordered regions span residues 170–212 (YQSH…QHPD), 609–633 (STRR…PKAS), and 1319–1349 (PTET…FPNS). The span at 177–188 (EEEEGEEEEETE) shows a compositional bias: acidic residues. Positions 609–631 (STRRRRDRGGGKRKRRPRGRGPK) are enriched in basic residues.

This sequence belongs to the SBNO family. As to quaternary structure, interacts with TAL1; this interaction inhibits TAL1 occupancy of the DCSTAMP promoter, leading to the activation of the DCSTAMP promoter by the transcription factor MITF. In terms of tissue distribution, expressed in the spleen and bone marrow, and to a lesser extent in the kidney, liver, brain, skin, heart and muscle. Expressed predominantly in osteoclasts, and to a lesser extent in T-cells, B-cells and osteoblasts. Expressed in macrophages.

Acts as a transcriptional coregulator, that can have both coactivator and corepressor functions. Inhibits the DCSTAMP-repressive activity of TAL1, hence enhancing the access of the transcription factor MITF to the DC-STAMP promoter in osteoclast. Plays a role in bone homeostasis; required as a positive regulator in TNFSF11//RANKL-mediated osteoclast fusion via a DCSTAMP-dependent pathway. May also be required in the regulation of osteoblast differentiation. Involved in the transcriptional corepression of NF-kappaB in macrophages. Plays a role as a regulator in the pro-inflammatory cascade. The protein is Protein strawberry notch homolog 2 (Sbno2) of Mus musculus (Mouse).